A 599-amino-acid chain; its full sequence is ATP-dependent zinc metalloprotease FtsH 3 (599 aa).

Over methionine 1 to asparagine 7 the chain is Cytoplasmic. Residues isoleucine 8–isoleucine 28 traverse the membrane as a helical segment. Topologically, residues glycine 29–serine 128 are extracellular. Residues isoleucine 129–alanine 149 form a helical membrane-spanning segment. The Cytoplasmic segment spans residues isoleucine 150–lysine 599. Glycine 214–threonine 221 contacts ATP. Residue histidine 436 coordinates Zn(2+). Glutamate 437 is a catalytic residue. Positions 440 and 512 each coordinate Zn(2+).

It in the central section; belongs to the AAA ATPase family. This sequence in the C-terminal section; belongs to the peptidase M41 family. Homohexamer. The cofactor is Zn(2+).

The protein localises to the cell membrane. Its function is as follows. Acts as a processive, ATP-dependent zinc metallopeptidase for both cytoplasmic and membrane proteins. Plays a role in the quality control of integral membrane proteins. The sequence is that of ATP-dependent zinc metalloprotease FtsH 3 from Phytoplasma mali (strain AT).